The following is a 313-amino-acid chain: Biotin synthase (313 aa).

A Radical SAM core domain is found at 38–262 (REVQISTLLS…TMPHARVRLS (225 aa)). Cys53, Cys57, and Cys60 together coordinate [4Fe-4S] cluster. [2Fe-2S] cluster-binding residues include Cys97, Cys128, Cys188, and Arg260.

The protein belongs to the radical SAM superfamily. Biotin synthase family. As to quaternary structure, homodimer. The cofactor is [4Fe-4S] cluster. [2Fe-2S] cluster is required as a cofactor.

It catalyses the reaction (4R,5S)-dethiobiotin + (sulfur carrier)-SH + 2 reduced [2Fe-2S]-[ferredoxin] + 2 S-adenosyl-L-methionine = (sulfur carrier)-H + biotin + 2 5'-deoxyadenosine + 2 L-methionine + 2 oxidized [2Fe-2S]-[ferredoxin]. It participates in cofactor biosynthesis; biotin biosynthesis; biotin from 7,8-diaminononanoate: step 2/2. Functionally, catalyzes the conversion of dethiobiotin (DTB) to biotin by the insertion of a sulfur atom into dethiobiotin via a radical-based mechanism. In Granulibacter bethesdensis (strain ATCC BAA-1260 / CGDNIH1), this protein is Biotin synthase.